We begin with the raw amino-acid sequence, 370 residues long: Sphingosine 1-phosphate receptor 2 (370 aa).

Residues methionine 1–asparagine 57 are Extracellular-facing. Asparagine 24 carries an N-linked (GlcNAc...) asparagine glycan. A helical membrane pass occupies residues isoleucine 58–valine 78. Residues phenylalanine 79–alanine 87 lie on the Cytoplasmic side of the membrane. Residues methionine 88 to alanine 108 traverse the membrane as a helical segment. The Extracellular portion of the chain corresponds to asparagine 109 to arginine 128. A helical membrane pass occupies residues glutamate 129–glutamate 149. The Cytoplasmic portion of the chain corresponds to arginine 150 to arginine 167. A helical transmembrane segment spans residues methionine 168 to isoleucine 193. Over asparagine 194 to serine 219 the chain is Extracellular. The helical transmembrane segment at isoleucine 220 to valine 230 threads the bilayer. Residues arginine 231–threonine 254 lie on the Cytoplasmic side of the membrane. Residues valine 255–leucine 275 form a helical membrane-spanning segment. The Extracellular portion of the chain corresponds to aspartate 276–asparagine 289. Residues alanine 290–leucine 310 traverse the membrane as a helical segment. Residues arginine 311–valine 370 are Cytoplasmic-facing. Cysteine 325 carries the S-palmitoyl cysteine lipid modification.

The protein belongs to the G-protein coupled receptor 1 family.

The protein localises to the cell membrane. Receptor for the lysosphingolipid sphingosine 1-phosphate (S1P). S1P receptor is critical for cell migration and epithelial integrity during vertebrate embryogenesis. Receptor for the chemokine-like protein FAM19A5. Mediates the inhibitory effect of FAM19A5 on vascular smooth muscle cell proliferation and migration. The sequence is that of Sphingosine 1-phosphate receptor 2 (s1pr2) from Danio rerio (Zebrafish).